The primary structure comprises 531 residues: Protein tweety homolog 2-like (531 aa).

Topologically, residues 1–44 are extracellular; the sequence is MASSRQDYIAPWWTYWLHNFPHLNFNFQTVDNTFKPEDASYQQS. Residues 45–65 traverse the membrane as a helical segment; it reads LVFLACVSAVALGLCLLLLSV. Residues 66 to 87 are Cytoplasmic-facing; that stretch reads YLTCLCCCRREEDEEVKRPDTC. A helical membrane pass occupies residues 88–108; it reads CVTWAAVITGLVICSAVGVGF. The Extracellular segment spans residues 109–213; it reads YGNSETNDGV…RTAFIEYYRW (105 aa). Asparagine 129 carries N-linked (GlcNAc...) asparagine glycosylation. The chain crosses the membrane as a helical span at residues 214–234; sequence LTYLLLLILDLVICLLACLAL. At 235-239 the chain is on the cytoplasmic side; it reads AKQSR. A helical transmembrane segment spans residues 240–260; that stretch reads WLLTVIMVCGMLTLIMSWASL. Over 261–389 the chain is Extracellular; the sequence is GAGTATAVGT…GVCYDGVEGL (129 aa). Residues asparagine 283 and asparagine 352 are each glycosylated (N-linked (GlcNAc...) asparagine). Residues 390-410 form a helical membrane-spanning segment; sequence LYLCLFSLLAACAFCALLCAV. Over 411–531 the chain is Cytoplasmic; sequence PRAWMLIAIR…IRHFGTDFQV (121 aa).

This sequence belongs to the tweety family.

It is found in the cell membrane. Functionally, probable large-conductance Ca(2+)-activated chloride channel. In Danio rerio (Zebrafish), this protein is Protein tweety homolog 2-like (ttyh2l).